The sequence spans 331 residues: tRNA-cytidine(32) 2-sulfurtransferase (331 aa).

Residues 73 to 78 carry the PP-loop motif motif; the sequence is SGGKDS. Positions 148, 151, and 239 each coordinate [4Fe-4S] cluster.

The protein belongs to the TtcA family. As to quaternary structure, homodimer. Mg(2+) is required as a cofactor. It depends on [4Fe-4S] cluster as a cofactor.

The protein localises to the cytoplasm. The catalysed reaction is cytidine(32) in tRNA + S-sulfanyl-L-cysteinyl-[cysteine desulfurase] + AH2 + ATP = 2-thiocytidine(32) in tRNA + L-cysteinyl-[cysteine desulfurase] + A + AMP + diphosphate + H(+). Its pathway is tRNA modification. Functionally, catalyzes the ATP-dependent 2-thiolation of cytidine in position 32 of tRNA, to form 2-thiocytidine (s(2)C32). The sulfur atoms are provided by the cysteine/cysteine desulfurase (IscS) system. The sequence is that of tRNA-cytidine(32) 2-sulfurtransferase from Burkholderia mallei (strain NCTC 10247).